A 286-amino-acid polypeptide reads, in one-letter code: 3-methyl-2-oxobutanoate hydroxymethyltransferase (286 aa).

Residues aspartate 51 and aspartate 90 each contribute to the Mg(2+) site. Residues 51-52, aspartate 90, and lysine 120 each bind 3-methyl-2-oxobutanoate; that span reads DS. Residue glutamate 122 coordinates Mg(2+). The active-site Proton acceptor is glutamate 189. The disordered stretch occupies residues 263-286; that stretch reads TFPGPSHVFSGSKASSDLNGGDES.

Belongs to the PanB family. As to quaternary structure, homodecamer; pentamer of dimers. Requires Mg(2+) as cofactor.

The protein resides in the cytoplasm. It catalyses the reaction 3-methyl-2-oxobutanoate + (6R)-5,10-methylene-5,6,7,8-tetrahydrofolate + H2O = 2-dehydropantoate + (6S)-5,6,7,8-tetrahydrofolate. It participates in cofactor biosynthesis; (R)-pantothenate biosynthesis; (R)-pantoate from 3-methyl-2-oxobutanoate: step 1/2. In terms of biological role, catalyzes the reversible reaction in which hydroxymethyl group from 5,10-methylenetetrahydrofolate is transferred onto alpha-ketoisovalerate to form ketopantoate. The chain is 3-methyl-2-oxobutanoate hydroxymethyltransferase from Mesorhizobium japonicum (strain LMG 29417 / CECT 9101 / MAFF 303099) (Mesorhizobium loti (strain MAFF 303099)).